The chain runs to 189 residues: Molybdenum cofactor guanylyltransferase (189 aa).

Residues 10–12 (LAG), Lys23, Asn51, Asp69, and Asp99 each bind GTP. A Mg(2+)-binding site is contributed by Asp99.

Belongs to the MobA family. Monomer. Requires Mg(2+) as cofactor.

It localises to the cytoplasm. It carries out the reaction Mo-molybdopterin + GTP + H(+) = Mo-molybdopterin guanine dinucleotide + diphosphate. Functionally, transfers a GMP moiety from GTP to Mo-molybdopterin (Mo-MPT) cofactor (Moco or molybdenum cofactor) to form Mo-molybdopterin guanine dinucleotide (Mo-MGD) cofactor. This Pasteurella multocida (strain Pm70) protein is Molybdenum cofactor guanylyltransferase.